The sequence spans 287 residues: Tetraspanning orphan receptor (287 aa).

The Extracellular segment spans residues 1 to 27 (MSPSLVSDTQKHERGSHGVKIKHFSPY). The chain crosses the membrane as a helical span at residues 28–48 (IAVCVTTFSLAFCCFMVHGAI). At 49–55 (TRQPTHL) the chain is on the cytoplasmic side. The chain crosses the membrane as a helical span at residues 56-76 (LPFFFIQVFDLIICLIHILGF). Residues 77–91 (MSSTSDIRLVIHTKT) lie on the Extracellular side of the membrane. Residues 92–114 (GPIYIKSTGLTFIILSISRMMLA) form a helical membrane-spanning segment. The Cytoplasmic segment spans residues 115–287 (FKAYCLGMVW…NASSNAHSSC (173 aa)). Positions 165-190 (NNSIGNSGSPNEPNTRPRPDTITYDP) are disordered.

Interacts (via N-terminal extracellular domain) with human C2a.

The protein resides in the cell membrane. Cell surface receptor that binds to human complement C2a protein. This results in inhibition of the classical and lectin pathways of complement activation, probably due to interference with binding of C2a to C4b and interference with cleavage by C1 or MASP2 such that C3 convertase cannot be formed. This infers resistance to complement-mediated cell lysis, allowing parasite survival and infection. The chain is Tetraspanning orphan receptor from Trypanosoma cruzi.